Here is a 551-residue protein sequence, read N- to C-terminus: Structure-specific endonuclease subunit MUS81 (551 aa).

Disordered regions lie at residues 84–131 (HLAS…VGYW) and 229–259 (FRPE…QQRP). Positions 92-107 (APSSPSGKKGASKGPP) are enriched in low complexity. Residue serine 95 is modified to Phosphoserine. Residues 110–131 (VQDSSMPVPTQPQAGSTSVGYW) show a composition bias toward polar residues. Residues 124–244 (GSTSVGYWPA…HGEDSAVPEA (121 aa)) form an interaction with BLM region. Residues 131 to 230 (WPAQNSGARE…GLSTRHAGFR (100 aa)) form a winged helix domain (WHD); critical for endonuclease activity region. Positions 229 to 238 (FRPEEHHGED) are enriched in basic and acidic residues. The 103-residue stretch at 270–372 (LLCVDIGETR…HRVYLVEEHG (103 aa)) folds into the ERCC4 domain. Catalysis depends on residues aspartate 274, glutamate 277, and aspartate 307. Residues aspartate 274, glutamate 277, aspartate 307, glutamate 333, and arginine 334 each contribute to the Mg(2+) site. The segment at 471–545 (VREVFARQLM…LSRTLYQLYC (75 aa)) is helix-hairpin-helix (2HhH); involved in DNA recognition and bending.

This sequence belongs to the XPF family. Part of the heterodimeric DNA structure-specific endonuclease complex MUS81-EME1. Part of the heterodimeric DNA structure-specific endonuclease complex MUS81-EME2. Interacts with BLM; may stimulate the endonuclease activity of MUS81. Interacts with SLX4/BTBD12; this interaction is direct and links the MUS81-EME1 complex to SLX4, which may coordinate the action of the structure-specific endonuclease during DNA repair. Interacts with DCLRE1B/Apollo. Interacts with RECQL5; this interaction stimulates mitotic DNA synthesis. Interacts with CHEK2. Mg(2+) is required as a cofactor. As to expression, expressed highly in testis. Expressed also in bone marrow, brain, thymus and to a lesser extent in heart and skeletal muscle, colon, kidney and spleen.

The protein localises to the nucleus. Its subcellular location is the nucleolus. In terms of biological role, catalytic subunit of two functionally distinct, structure-specific, heterodimeric DNA endonucleases MUS81-EME1 and MUS81-EME2 that are involved in the maintenance of genome stability. Both endonucleases have essentially the same substrate specificity though MUS81-EME2 is more active than its MUS81-EME1 counterpart. Both cleave 3'-flaps and nicked Holliday junctions, and exhibit limited endonuclease activity with 5' flaps and nicked double-stranded DNAs. MUS81-EME2 which is active during the replication of DNA is more specifically involved in replication fork processing. Replication forks frequently encounter obstacles to their passage, including DNA base lesions, DNA interstrand cross-links, difficult-to-replicate sequences, transcription bubbles, or tightly bound proteins. One mechanism for the restart of a stalled replication fork involves nucleolytic cleavage mediated by the MUS81-EME2 endonuclease. By acting upon the stalled fork, MUS81-EME2 generates a DNA double-strand break (DSB) that can be repaired by homologous recombination, leading to the restoration of an active fork. MUS81-EME2 could also function in telomere maintenance. MUS81-EME1, on the other hand, is active later in the cell cycle and functions in the resolution of mitotic recombination intermediates including the Holliday junctions, the four-way DNA intermediates that form during homologous recombination. This chain is Structure-specific endonuclease subunit MUS81, found in Mus musculus (Mouse).